An 897-amino-acid polypeptide reads, in one-letter code: Chromodomain-helicase-DNA-binding protein 1-like (897 aa).

At Arg-9 the chain carries Omega-N-methylarginine. Residues 58–223 form the Helicase ATP-binding domain; it reads AQRFHCQNGC…YSLLSFVEPD (166 aa). 71–78 provides a ligand contact to ATP; sequence DEMGLGKT. Residues 174–177 carry the DEAH box motif; sequence DEAH. Positions 351–513 constitute a Helicase C-terminal domain; sequence LLDKLLAFLY…QKPAADADLQ (163 aa). Ser-540, Ser-607, Ser-618, Ser-628, and Ser-636 each carry phosphoserine. Residues 601–635 are regulatory linker segment (RLS); sequence TLLEKASQEGRSLRNKGSVLIPGLVEGSTKRKRVL. A required for ATPase activity region spans residues 615–673; it reads NKGSVLIPGLVEGSTKRKRVLSPEELEDRQKKRQEAAAKRRRLIEEKKRQKEEAEHKKK. 2 disordered regions span residues 628–654 and 687–711; these read STKRKRVLSPEELEDRQKKRQEAAAKR and LPSEESEPEDLENGEESSAELDYQD. The stretch at 638–675 forms a coiled coil; the sequence is EELEDRQKKRQEAAAKRRRLIEEKKRQKEEAEHKKKMA. The span at 642 to 654 shows a compositional bias: basic and acidic residues; the sequence is DRQKKRQEAAAKR. Over residues 690–711 the composition is skewed to acidic residues; that stretch reads EESEPEDLENGEESSAELDYQD. Residues 704 to 897 enclose the Macro domain; the sequence is SAELDYQDPD…SSSSSRQLVP (194 aa). Phosphoserine is present on Ser-891.

Belongs to the SNF2/RAD54 helicase family. In terms of assembly, interacts with nucleosomes; interacts with the acidic patch of histones. Interacts (via macro domain) with PARP1; interacts only when PARP1 is poly-ADP-ribosylated (PARylated). Interacts with CIAO1. Frequently overexpressed in hepatomacellular carcinomas.

It is found in the nucleus. It localises to the chromosome. It carries out the reaction ATP + H2O = ADP + phosphate + H(+). Its activity is regulated as follows. Adopts an inactive conformation in absence of DNA damage. Binding to poly-ADP-ribosylated histones activates the ATP-dependent chromatin remodeler activity. Functionally, ATP-dependent chromatin remodeler that mediates chromatin-remodeling following DNA damage. Recruited to DNA damage sites through interaction with poly-ADP-ribose: specifically recognizes and binds histones that are poly-ADP-ribosylated on serine residues in response to DNA damage. Poly-ADP-ribose-binding activates the ATP-dependent chromatin remodeler activity, thereby regulating chromatin during DNA repair. Catalyzes nucleosome sliding away from DNA breaks in an ATP-dependent manner. Chromatin remodeling activity promotes PARP2 removal from chromatin. This chain is Chromodomain-helicase-DNA-binding protein 1-like, found in Homo sapiens (Human).